The following is a 71-amino-acid chain: Protein SlyX homolog (71 aa).

The protein belongs to the SlyX family.

The protein is Protein SlyX homolog of Rhodospirillum rubrum (strain ATCC 11170 / ATH 1.1.1 / DSM 467 / LMG 4362 / NCIMB 8255 / S1).